A 327-amino-acid polypeptide reads, in one-letter code: Zinc finger protein 444 (327 aa).

Position 1 is an N-acetylmethionine (M1). A Glycyl lysine isopeptide (Lys-Gly) (interchain with G-Cter in SUMO2) cross-link involves residue K8. Phosphoserine is present on residues S18 and S104. The 85-residue stretch at 20-104 (WHRFRRFHLG…LEELWGPAAS (85 aa)) folds into the SCAN box domain. Positions 101-171 (PAASPDGSSA…SPPLAPGLPA (71 aa)) are disordered. Positions 106–118 (DGSSATRVPQDVT) are enriched in polar residues. A compositionally biased stretch (low complexity) spans 134 to 148 (PLAGTAPGAEGPAPG). 2 consecutive C2H2-type zinc fingers follow at residues 179–201 (TSCP…RQSH) and 207–229 (HACP…RDTH). K190 is covalently cross-linked (Glycyl lysine isopeptide (Lys-Gly) (interchain with G-Cter in SUMO2)). The interval 220–243 (EHLRRHRDTHPGSPGSPGPALRPL) is disordered. The residue at position 235 (S235) is a Phosphoserine. 2 consecutive C2H2-type zinc fingers follow at residues 250 to 272 (HACC…RKTH) and 278 to 300 (FACW…QRIH). A compositionally biased stretch (low complexity) spans 305 to 314 (ASAQGAVAPG). The interval 305–327 (ASAQGAVAPGPDGGGPFPPWPLG) is disordered.

Belongs to the krueppel C2H2-type zinc-finger protein family.

It is found in the nucleus. Its function is as follows. Transcriptional regulator. Binds to the 5'-flanking critical region of the SCARF1 promoter. This is Zinc finger protein 444 (ZNF444) from Homo sapiens (Human).